The chain runs to 436 residues: UDP-N-acetylmuramate--L-alanine ligase (436 aa).

110–116 (GAHGKTS) lines the ATP pocket.

The protein belongs to the MurCDEF family.

Its subcellular location is the cytoplasm. It catalyses the reaction UDP-N-acetyl-alpha-D-muramate + L-alanine + ATP = UDP-N-acetyl-alpha-D-muramoyl-L-alanine + ADP + phosphate + H(+). It participates in cell wall biogenesis; peptidoglycan biosynthesis. Functionally, cell wall formation. The polypeptide is UDP-N-acetylmuramate--L-alanine ligase (Lacticaseibacillus paracasei (strain ATCC 334 / BCRC 17002 / CCUG 31169 / CIP 107868 / KCTC 3260 / NRRL B-441) (Lactobacillus paracasei)).